Here is a 367-residue protein sequence, read N- to C-terminus: Cobalt-precorrin-5B C(1)-methyltransferase (367 aa).

This sequence belongs to the CbiD family.

It carries out the reaction Co-precorrin-5B + S-adenosyl-L-methionine = Co-precorrin-6A + S-adenosyl-L-homocysteine. It functions in the pathway cofactor biosynthesis; adenosylcobalamin biosynthesis; cob(II)yrinate a,c-diamide from sirohydrochlorin (anaerobic route): step 6/10. Catalyzes the methylation of C-1 in cobalt-precorrin-5B to form cobalt-precorrin-6A. The protein is Cobalt-precorrin-5B C(1)-methyltransferase of Thermosynechococcus vestitus (strain NIES-2133 / IAM M-273 / BP-1).